The chain runs to 70 residues: Protein SlyX homolog (70 aa).

Belongs to the SlyX family.

This chain is Protein SlyX homolog, found in Shewanella pealeana (strain ATCC 700345 / ANG-SQ1).